A 371-amino-acid chain; its full sequence is GTPase Obg (371 aa).

Residues 1–159 enclose the Obg domain; that stretch reads MKFLDQAKVY…KTIWLRLKLI (159 aa). The 168-residue stretch at 160–327 folds into the OBG-type G domain; it reads ADAGLVGLPN…VLRALRDIIV (168 aa). Residues 166-173, 191-195, 212-215, 279-282, and 308-310 each bind GTP; these read GLPNAGKS, FTTLH, DIPG, SQID, and SAI. 2 residues coordinate Mg(2+): Ser173 and Thr193. A disordered region spans residues 337-371; sequence APMKALKVRHRDMQSSGNEGESEDNSDRDDEEQQG. The span at 356-371 shows a compositional bias: acidic residues; it reads GESEDNSDRDDEEQQG.

It belongs to the TRAFAC class OBG-HflX-like GTPase superfamily. OBG GTPase family. In terms of assembly, monomer. The cofactor is Mg(2+).

It localises to the cytoplasm. In terms of biological role, an essential GTPase which binds GTP, GDP and possibly (p)ppGpp with moderate affinity, with high nucleotide exchange rates and a fairly low GTP hydrolysis rate. Plays a role in control of the cell cycle, stress response, ribosome biogenesis and in those bacteria that undergo differentiation, in morphogenesis control. In Rhizobium rhizogenes (strain K84 / ATCC BAA-868) (Agrobacterium radiobacter), this protein is GTPase Obg.